Reading from the N-terminus, the 484-residue chain is CUGBP Elav-like family member 2 (484 aa).

Necessary for nuclear export regions lie at residues 1 to 89 (MNGA…PGMH) and 90 to 178 (HPIQ…EGCS). RRM domains are found at residues 16–99 (IKTF…PADS), 108–188 (RKLF…FADT), and 399–477 (ANLF…LKRS). The interval 188–240 (TQKDKEQRRLQQQLAQQMQQLNTATWGNLTGLGGLTPQYLALLQQATSSSNLG) is necessary for splicing activity. The interval 347 to 399 (GLTNGTAGTMDALTQAYSGIQQYAAAALPTLYSQSLLQQQSAAGSQKEGPEGA) is necessary for nuclear localization. The necessary for nuclear localization and splicing activity stretch occupies residues 426 to 484 (ISAKVFIDKQTNLSKCFGFVSYDNPVSAQAAIQAMNGFQIGMKRLKVQLKRSKNDSKPY).

Belongs to the CELF/BRUNOL family. Expressed in heart.

The protein localises to the nucleus. It is found in the cytoplasm. Functionally, RNA-binding protein implicated in the regulation of several post-transcriptional events. May be involved in mRNA translation repression and stability. Mediates exon inclusion in TNNT2 pre-mRNA. This is CUGBP Elav-like family member 2 (CELF2) from Gallus gallus (Chicken).